Consider the following 354-residue polypeptide: Tribbles homolog 3 (354 aa).

The interval 1 to 127 (MRATPLAASA…QHVARPTEVL (127 aa)) is interaction with DDIT3/CHOP. The disordered stretch occupies residues 36-61 (RDEPEPGPLPSLLPPSPPPASDLSPA). Positions 41–55 (PGPLPSLLPPSPPPA) are enriched in pro residues. Residues 68–315 (LGPYILLERE…ALGILLHPWL (248 aa)) form the Protein kinase domain. Basic and acidic residues predominate over residues 320–333 (GRVSPPQSDRREMD). Residues 320-354 (GRVSPPQSDRREMDQVVPDGPQLEEAEEGEVGLYG) are disordered. Acidic residues predominate over residues 341–354 (QLEEAEEGEVGLYG).

The protein belongs to the protein kinase superfamily. CAMK Ser/Thr protein kinase family. Tribbles subfamily. In terms of assembly, interacts with AKT1, AKT2, MAP2K1 and MAP2K7. Interacts with ATF4. Interacts with DDIT3/CHOP and inhibits its interaction with EP300/P300. Interacts with APOBEC3C. Interacts (via N-terminus) with APOBEC3A. Interacts with RELA. Highly expressed in liver. Not detected in heart, brain, spleen, lung, skeletal muscle, kidney or testis.

The protein localises to the nucleus. Functionally, inactive protein kinase which acts as a regulator of the integrated stress response (ISR), a process for adaptation to various stress. Inhibits the transcriptional activity of DDIT3/CHOP and is involved in DDIT3/CHOP-dependent cell death during ER stress. May play a role in programmed neuronal cell death but does not appear to affect non-neuronal cells. Acts as a negative feedback regulator of the ATF4-dependent transcription during the ISR: while TRIB3 expression is promoted by ATF4, TRIB3 protein interacts with ATF4 and inhibits ATF4 transcription activity. Disrupts insulin signaling by binding directly to Akt kinases and blocking their activation. May bind directly to and mask the 'Thr-308' phosphorylation site in AKT1. Interacts with the NF-kappa-B transactivator p65 RELA and inhibits its phosphorylation and thus its transcriptional activation activity. Interacts with MAPK kinases and regulates activation of MAP kinases. Can inhibit APOBEC3A editing of nuclear DNA. This Mus musculus (Mouse) protein is Tribbles homolog 3 (Trib3).